A 206-amino-acid chain; its full sequence is Ribosomal RNA large subunit methyltransferase E (206 aa).

5 residues coordinate S-adenosyl-L-methionine: Gly-60, Trp-62, Asp-80, Asp-96, and Asp-121. Lys-161 (proton acceptor) is an active-site residue.

The protein belongs to the class I-like SAM-binding methyltransferase superfamily. RNA methyltransferase RlmE family.

It is found in the cytoplasm. The enzyme catalyses uridine(2552) in 23S rRNA + S-adenosyl-L-methionine = 2'-O-methyluridine(2552) in 23S rRNA + S-adenosyl-L-homocysteine + H(+). In terms of biological role, specifically methylates the uridine in position 2552 of 23S rRNA at the 2'-O position of the ribose in the fully assembled 50S ribosomal subunit. The polypeptide is Ribosomal RNA large subunit methyltransferase E (Francisella tularensis subsp. novicida (strain U112)).